The chain runs to 112 residues: Serum amyloid A protein (112 aa).

Position 1 is a pyrrolidone carboxylic acid (Gln1). Residues 75-86 (MTRDQVREDTKA) show a composition bias toward basic and acidic residues. Positions 75 to 112 (MTRDQVREDTKADQFANEWGRSGKDPNHFRPPGLPDKY) are disordered.

The protein belongs to the SAA family. In terms of tissue distribution, expressed by the liver; secreted in plasma.

The protein localises to the secreted. Functionally, major acute phase reactant. Apolipoprotein of the HDL complex. The chain is Serum amyloid A protein (SAA1) from Ovis aries (Sheep).